The sequence spans 375 residues: Alanine racemase (375 aa).

Lysine 40 (proton acceptor; specific for D-alanine) is an active-site residue. Lysine 40 is modified (N6-(pyridoxal phosphate)lysine). Arginine 140 contributes to the substrate binding site. Tyrosine 268 functions as the Proton acceptor; specific for L-alanine in the catalytic mechanism. Methionine 315 contributes to the substrate binding site.

It belongs to the alanine racemase family. Pyridoxal 5'-phosphate is required as a cofactor.

It catalyses the reaction L-alanine = D-alanine. The protein operates within amino-acid biosynthesis; D-alanine biosynthesis; D-alanine from L-alanine: step 1/1. Functionally, catalyzes the interconversion of L-alanine and D-alanine. May also act on other amino acids. This Limosilactobacillus reuteri (strain DSM 20016) (Lactobacillus reuteri) protein is Alanine racemase (alr).